The sequence spans 46 residues: Esculentin-1 (46 aa).

Cys-40 and Cys-46 are oxidised to a cystine.

In terms of tissue distribution, expressed by the skin glands.

It is found in the secreted. Functionally, antimicrobial peptide. Stimulates insulin release by BRIN-BD11 cells in vitro. The polypeptide is Esculentin-1 (Pelophylax saharicus (Sahara frog)).